The following is a 416-amino-acid chain: Ribulose bisphosphate carboxylase large chain (416 aa).

Residues asparagine 102 and threonine 152 each contribute to the substrate site. Catalysis depends on lysine 154, which acts as the Proton acceptor. Lysine 156 is a binding site for substrate. Mg(2+) is bound by residues lysine 180, aspartate 182, and glutamate 183. The residue at position 180 (lysine 180) is an N6-carboxylysine. Histidine 273 (proton acceptor) is an active-site residue. Substrate contacts are provided by arginine 274, histidine 306, and serine 358.

It belongs to the RuBisCO large chain family. Type I subfamily. Heterohexadecamer of 8 large chains and 8 small chains; disulfide-linked. The disulfide link is formed within the large subunit homodimers. It depends on Mg(2+) as a cofactor. The disulfide bond which can form in the large chain dimeric partners within the hexadecamer appears to be associated with oxidative stress and protein turnover.

It is found in the plastid. It localises to the chloroplast. It carries out the reaction 2 (2R)-3-phosphoglycerate + 2 H(+) = D-ribulose 1,5-bisphosphate + CO2 + H2O. It catalyses the reaction D-ribulose 1,5-bisphosphate + O2 = 2-phosphoglycolate + (2R)-3-phosphoglycerate + 2 H(+). In terms of biological role, ruBisCO catalyzes two reactions: the carboxylation of D-ribulose 1,5-bisphosphate, the primary event in carbon dioxide fixation, as well as the oxidative fragmentation of the pentose substrate in the photorespiration process. Both reactions occur simultaneously and in competition at the same active site. The chain is Ribulose bisphosphate carboxylase large chain (rbcL) from Arthropteris beckleri (Fern).